A 179-amino-acid polypeptide reads, in one-letter code: Hypoxanthine-guanine phosphoribosyltransferase (179 aa).

Diphosphate-binding residues include K42 and G43. Residues E98 and D99 each coordinate Mg(2+). The active-site Proton acceptor is the E102. GMP is bound by residues K130, 151 to 152, and D158; that span reads FV. A diphosphate-binding site is contributed by R164.

It belongs to the purine/pyrimidine phosphoribosyltransferase family. It depends on Mg(2+) as a cofactor.

It localises to the cytoplasm. It catalyses the reaction IMP + diphosphate = hypoxanthine + 5-phospho-alpha-D-ribose 1-diphosphate. The catalysed reaction is GMP + diphosphate = guanine + 5-phospho-alpha-D-ribose 1-diphosphate. It participates in purine metabolism; IMP biosynthesis via salvage pathway; IMP from hypoxanthine: step 1/1. The protein operates within purine metabolism; GMP biosynthesis via salvage pathway; GMP from guanine: step 1/1. Purine salvage pathway enzyme that catalyzes the transfer of the ribosyl-5-phosphate group from 5-phospho-alpha-D-ribose 1-diphosphate (PRPP) to the N9 position of the 6-oxopurines hypoxanthine and guanine to form the corresponding ribonucleotides IMP (inosine 5'-monophosphate) and GMP (guanosine 5'-monophosphate), with the release of PPi. The polypeptide is Hypoxanthine-guanine phosphoribosyltransferase (hpt) (Staphylococcus epidermidis (strain ATCC 35984 / DSM 28319 / BCRC 17069 / CCUG 31568 / BM 3577 / RP62A)).